A 138-amino-acid chain; its full sequence is uncharacterized protein (138 aa).

2 consecutive transmembrane segments (helical) span residues 21 to 43 (TAFI…AGGA) and 48 to 65 (SLIA…YAII).

The protein resides in the cell membrane. This is an uncharacterized protein from Archaeoglobus fulgidus (strain ATCC 49558 / DSM 4304 / JCM 9628 / NBRC 100126 / VC-16).